Consider the following 500-residue polypeptide: Inner membrane transporter YjeM (500 aa).

At 1–10 (MTHTIKKMSL) the chain is on the cytoplasmic side. The chain crosses the membrane as a helical span at residues 11–31 (IGLILMIFTSVFGFANSPSAF). At 32 to 37 (YLMGYS) the chain is on the periplasmic side. A helical membrane pass occupies residues 38-58 (AIPWYIFSALLFFIPFALMMA). Over 59–83 (EMGSAYRKEEGGIYSWMNNSVGPRY) the chain is Cytoplasmic. A helical transmembrane segment spans residues 84-104 (AFIGTFMWFSSYVIWMVSTAA). At 105-124 (KIWVPFSTFVFGADMTQHWR) the chain is on the periplasmic side. Residues 125 to 145 (IAGLEPTQVVGLLAVGWMILV) form a helical membrane-spanning segment. The Cytoplasmic portion of the chain corresponds to 146–163 (TCVAARGINKIARITAVG). A helical transmembrane segment spans residues 164–184 (GIAVMCLNLVLLLVSVAILLL). Residues 185 to 209 (NGGHFAQEINFTSSPNPGYHSGLAM) lie on the Periplasmic side of the membrane. A helical transmembrane segment spans residues 210 to 230 (LSFVVFAIFAYGGIEAVGGLV). The Cytoplasmic segment spans residues 231 to 243 (DKTEKPEKNFAKG). A helical membrane pass occupies residues 244 to 264 (IVFAAIVISIGYSLAIFLWGV). The Periplasmic portion of the chain corresponds to 265–308 (STNWQQILSNSAVNLGNITYILMSSLGTTLGNALNLSPEAAMTV). A helical transmembrane segment spans residues 309 to 329 (GVWFARITGLSMFLAYTGAFF). The Cytoplasmic segment spans residues 330–361 (TLSYSPLKAIIQGTPKALWPAPMTTLNANGMP). A helical membrane pass occupies residues 362-382 (ATAMWLQCVLVSLFILLVSFG). At 383–394 (GDTASAFYNKLT) the chain is on the periplasmic side. A helical membrane pass occupies residues 395-415 (LMANVSMTLPYLFLALAFPFF). Topologically, residues 416 to 433 (KARQDLERPFVLFKTKAS) are cytoplasmic. Residues 434–454 (TLVATGVVVLVVTFANVFTII) form a helical membrane-spanning segment. Residues 455–462 (QPVIEAGD) lie on the Periplasmic side of the membrane. The chain crosses the membrane as a helical span at residues 463–483 (WDSALWMIGGPIFFSLLAMAI). Topologically, residues 484–500 (YQNYSSRMSADPEWAAE) are cytoplasmic.

Belongs to the amino acid-polyamine-organocation (APC) superfamily.

The protein resides in the cell inner membrane. The protein is Inner membrane transporter YjeM (yjeM) of Salmonella typhi.